The chain runs to 277 residues: Undecaprenyl-diphosphatase (277 aa).

A run of 6 helical transmembrane segments spans residues 44–64, 86–106, 110–130, 184–204, 215–235, and 250–270; these read RAMA…VWEF, GNLL…ADLI, LFNP…MLWA, AATE…AVYS, GDLP…MIAV, and FAWY…FGWV.

It belongs to the UppP family.

It is found in the cell inner membrane. It carries out the reaction di-trans,octa-cis-undecaprenyl diphosphate + H2O = di-trans,octa-cis-undecaprenyl phosphate + phosphate + H(+). Its function is as follows. Catalyzes the dephosphorylation of undecaprenyl diphosphate (UPP). Confers resistance to bacitracin. This Pseudomonas putida (strain ATCC 47054 / DSM 6125 / CFBP 8728 / NCIMB 11950 / KT2440) protein is Undecaprenyl-diphosphatase.